The following is a 397-amino-acid chain: L-cysteine desulfidase (397 aa).

Cys-23 functions as the Proton acceptor in the catalytic mechanism. 3 residues coordinate [4Fe-4S] cluster: Cys-288, Cys-330, and Cys-337.

The protein belongs to the L-cysteine desulfidase family. As to quaternary structure, homotrimer. It depends on [4Fe-4S] cluster as a cofactor.

It carries out the reaction L-cysteine + H2O = hydrogen sulfide + pyruvate + NH4(+) + H(+). In terms of biological role, catalyzes the cleavage of L-cysteine to form 2-aminoprop-2-enoate and sulfide. The former then spontaneously hydrolyzes to pyruvate and NH(3). May be responsible for the production of sulfide required for the biosynthesis of iron-sulfur centers in this archaea. This chain is L-cysteine desulfidase, found in Methanococcus maripaludis (strain C7 / ATCC BAA-1331).